The following is a 36-amino-acid chain: Dolichyl-diphosphooligosaccharide--protein glycosyltransferase subunit 2 (36 aa).

This sequence belongs to the SWP1 family. Component of the oligosaccharyltransferase (OST) complex.

It is found in the endoplasmic reticulum. The protein localises to the endoplasmic reticulum membrane. It participates in protein modification; protein glycosylation. Subunit of the oligosaccharyl transferase (OST) complex that catalyzes the initial transfer of a defined glycan (Glc(3)Man(9)GlcNAc(2) in eukaryotes) from the lipid carrier dolichol-pyrophosphate to an asparagine residue within an Asn-X-Ser/Thr consensus motif in nascent polypeptide chains, the first step in protein N-glycosylation. N-glycosylation occurs cotranslationally and the complex associates with the Sec61 complex at the channel-forming translocon complex that mediates protein translocation across the endoplasmic reticulum (ER). All subunits are required for a maximal enzyme activity. The sequence is that of Dolichyl-diphosphooligosaccharide--protein glycosyltransferase subunit 2 from Gallus gallus (Chicken).